The chain runs to 1497 residues: Dual oxidase 1 (1497 aa).

Positions 1–21 (MRSKHVLYIAILFSSIFGGKG) are cleaved as a signal peptide. Over 22–587 (IQQNEEFQRY…MQSTYWTDND (566 aa)) the chain is Extracellular. Positions 26–590 (EEFQRYDGWY…TYWTDNDTTY (565 aa)) are peroxidase-like; mediates peroxidase activity. 4 N-linked (GlcNAc...) asparagine glycosylation sites follow: asparagine 66, asparagine 305, asparagine 567, and asparagine 586. A helical membrane pass occupies residues 588 to 608 (TTYVFTLIGLACVPLICYGIG). Topologically, residues 609 to 986 (RYLVNRRIAI…VSAFLETYRQ (378 aa)) are cytoplasmic. 2 consecutive EF-hand domains span residues 817–852 (ANNE…FVNA) and 853–888 (PQKQ…LNQT). A helical membrane pass occupies residues 987–1007 (HVFIVFCFVAINLVLFFERFW). The Extracellular portion of the chain corresponds to 1008–1024 (HYRYMAENRDLRRVMGA). The helical transmembrane segment at 1025–1045 (GIAITRGAAGALSFCMALILL) threads the bilayer. The 181-residue stretch at 1030-1210 (RGAAGALSFC…FVIDRIIGLM (181 aa)) folds into the Ferric oxidoreductase domain. The Cytoplasmic portion of the chain corresponds to 1046-1068 (TVCRNIITLLRETVIAQYIPFDS). Residues 1069 to 1089 (AIAFHKIVALFAAFWATLHTV) traverse the membrane as a helical segment. The Extracellular portion of the chain corresponds to 1090–1134 (GHCVNFYHVGTQSQEGLACLFQEAFFGSNFLPSISYWFFSTITGL). The helical transmembrane segment at 1135 to 1155 (TGIALVAVMCIIYVFALPCFI) threads the bilayer. The Cytoplasmic portion of the chain corresponds to 1156 to 1163 (KRAYHAFR). A helical membrane pass occupies residues 1164–1184 (LTHLLNIAFYALTLLHGLPKL). The Extracellular segment spans residues 1185 to 1189 (LDSPK). Residues 1190-1210 (FGYYVVGPIVLFVIDRIIGLM) traverse the membrane as a helical segment. The region spanning 1211–1318 (QYYKKLEIVN…KGPYGDGNQE (108 aa)) is the FAD-binding FR-type domain. The Cytoplasmic portion of the chain corresponds to 1211–1497 (QYYKKLEIVN…PSFAHRFETF (287 aa)).

This sequence in the N-terminal section; belongs to the peroxidase family. As to quaternary structure, interacts with doxa-1 and tsp-15. Interacts with rho-1. In terms of tissue distribution, expressed in hypodermal cells.

The protein resides in the membrane. It carries out the reaction NADH + O2 + H(+) = H2O2 + NAD(+). The catalysed reaction is NADPH + O2 + H(+) = H2O2 + NADP(+). Peroxidase activity is inhibited by aminobenzohydrazide. In terms of biological role, plays a role in cuticle biogenesis. In complex with doxa-1 and tsp-15, produces reactive oxygen species (ROS), which are probably used by mlt-7 for tyrosine cross-linking, thus stabilizing cuticular extracellular matrix. May regulate the production of ROS by playing a role in modulating proline catabolism. Required in combination with mlt-7 for correct formation of cross-links in cuticle collagens. Association with the GTPase rho-1 promotes ROS production and this interaction may be modulated by memo-1, in order to control the oxidative stress response and longevity. The polypeptide is Dual oxidase 1 (Caenorhabditis elegans).